Reading from the N-terminus, the 377-residue chain is MSNGIVIIGSGFAARQLVKNIRKQDATIPLTLIAADSMDEYNKPDLSHVISQGQRADDLTRQTAGEFAEQFNLRLFPHTWVTDIDAEARVVKSQNNQWQYGKLVLATGASAFVPPVPGRELMLTLNSQQEYRACETQLRDARRVLIVGGGLIGSELAMDFCRAGKAVTLIDNAASILASLMPPEVSSRLQHRLTEMGVHLLLKSQLQGLEKTDSGILATLDRQRSIEVDAVIAATGLRPETALARRAGLTINRGVCVDSYLQTSNDDIYALGDCAEINGQVLPFLQPIQLSAMVLAKNLLGNNTPLKLPAMLVKIKTPELPLHLAGETQRQDLRWQINTERQGMVARGVDDADQLRAFVVSEDRMKEAFGLLKTLPM.

It belongs to the FAD-dependent oxidoreductase family. FAD serves as cofactor.

The protein resides in the cytoplasm. It carries out the reaction 2 reduced [nitric oxide reductase rubredoxin domain] + NAD(+) + H(+) = 2 oxidized [nitric oxide reductase rubredoxin domain] + NADH. Its pathway is nitrogen metabolism; nitric oxide reduction. In terms of biological role, one of at least two accessory proteins for anaerobic nitric oxide (NO) reductase. Reduces the rubredoxin moiety of NO reductase. In Escherichia coli O139:H28 (strain E24377A / ETEC), this protein is Nitric oxide reductase FlRd-NAD(+) reductase.